The sequence spans 670 residues: DNA ligase (670 aa).

NAD(+) is bound by residues 33–37 (DVEYD), 82–83 (SL), and E114. K116 functions as the N6-AMP-lysine intermediate in the catalytic mechanism. R137, E174, K291, and K315 together coordinate NAD(+). Positions 409, 412, 427, and 433 each coordinate Zn(2+). A BRCT domain is found at 593–670 (DQELPLEGKV…TEEDLIALIS (78 aa)).

It belongs to the NAD-dependent DNA ligase family. LigA subfamily. Mg(2+) is required as a cofactor. Mn(2+) serves as cofactor.

It catalyses the reaction NAD(+) + (deoxyribonucleotide)n-3'-hydroxyl + 5'-phospho-(deoxyribonucleotide)m = (deoxyribonucleotide)n+m + AMP + beta-nicotinamide D-nucleotide.. DNA ligase that catalyzes the formation of phosphodiester linkages between 5'-phosphoryl and 3'-hydroxyl groups in double-stranded DNA using NAD as a coenzyme and as the energy source for the reaction. It is essential for DNA replication and repair of damaged DNA. The polypeptide is DNA ligase (Vibrio atlanticus (strain LGP32) (Vibrio splendidus (strain Mel32))).